Here is a 322-residue protein sequence, read N- to C-terminus: Transcription factor WRKY45-2 (322 aa).

Residues Gly67–Asn110 are disordered. The segment at residues Val112–Pro180 is a DNA-binding region (WRKY). Positions Ser256–Asp284 are disordered.

This sequence belongs to the WRKY group III family. Expressed in aleurone cells.

The protein resides in the nucleus. Functionally, transcriptional activator involved in defense responses against pathogens. Acts as a positive regulator of defense responses against the rice blast fungus Magnaporthe oryzae. Acts as a positive regulator of defense responses against the bacterial blight Xanthomonas oryzae pv oryzae (Xoo) and the bacterial streak Xanthomonas oryzae pv oryzicola (Xoc). Acts as a positive regulator of abscisic acid (ABA) signaling that suppresses growth of seedlings. Acts as a negative regulator of salt stress response. Acts as a negative regulator of cold stress response. Acts as a negative regulator of drought stress response. The sequence is that of Transcription factor WRKY45-2 from Oryza sativa subsp. indica (Rice).